Here is a 389-residue protein sequence, read N- to C-terminus: Chalcone synthase 9 (389 aa).

C164 is an active-site residue.

The protein belongs to the thiolase-like superfamily. Chalcone/stilbene synthases family.

The enzyme catalyses (E)-4-coumaroyl-CoA + 3 malonyl-CoA + 3 H(+) = 2',4,4',6'-tetrahydroxychalcone + 3 CO2 + 4 CoA. Its pathway is secondary metabolite biosynthesis; flavonoid biosynthesis. Functionally, the primary product of this enzyme is 4,2',4',6'-tetrahydroxychalcone (also termed naringenin-chalcone or chalcone) which can under specific conditions spontaneously isomerize into naringenin. This Daucus carota (Wild carrot) protein is Chalcone synthase 9 (CHS9).